A 310-amino-acid chain; its full sequence is CCR4-NOT transcription complex subunit 7 (310 aa).

A divalent metal cation contacts are provided by D51, E53, D172, and D245.

Belongs to the CAF1 family. Component of the CCR4-NOT complex at least composed of ccf-1, ccr-4 and let-711, which is required for germ cell development in hermaphrodites. Within the complex interacts with let-711. Highly expressed in the germline. In particular, highly expressed in germ cells that enter meiosis and progress through the pachytene stage.

It localises to the nucleus. Its subcellular location is the cytoplasm. It carries out the reaction Exonucleolytic cleavage of poly(A) to 5'-AMP.. Its function is as follows. Catalytic component of the CCR4-NOT complex which is one of the major cellular mRNA deadenylases and is linked to various cellular processes including bulk mRNA degradation, miRNA-mediated repression, translational repression during translational initiation and general transcription regulation. Within the complex, plays a role in miRNA-mediated deadenylation in embryos. Within the complex promotes germ cell development and fertility in hermaphrodites. Additional complex functions may be a consequence of its influence on mRNA expression. This chain is CCR4-NOT transcription complex subunit 7, found in Caenorhabditis elegans.